Reading from the N-terminus, the 153-residue chain is Regulatory protein RecX (153 aa).

It belongs to the RecX family.

Its subcellular location is the cytoplasm. In terms of biological role, modulates RecA activity. The protein is Regulatory protein RecX of Pseudomonas aeruginosa (strain UCBPP-PA14).